The sequence spans 434 residues: Probable G-protein coupled receptor 150 (434 aa).

At Met-1–Asp-3 the chain is on the extracellular side. The helical transmembrane segment at Leu-4–Trp-24 threads the bilayer. Topologically, residues Gly-25–Arg-43 are cytoplasmic. A helical transmembrane segment spans residues Val-44–Leu-64. The Extracellular segment spans residues Cys-65–Lys-81. A helical membrane pass occupies residues Met-82–Leu-102. The Cytoplasmic portion of the chain corresponds to Ser-103–Arg-162. The helical transmembrane segment at Ala-163 to Val-183 threads the bilayer. Residues Arg-184–Ala-237 are Extracellular-facing. The tract at residues Pro-188 to Ala-210 is disordered. The segment covering Ser-189 to Pro-205 has biased composition (pro residues). A helical membrane pass occupies residues Val-238–Val-258. Topologically, residues Trp-259 to Ser-293 are cytoplasmic. Residues Leu-294–Ala-314 form a helical membrane-spanning segment. The Extracellular segment spans residues Arg-315–Ser-334. A helical membrane pass occupies residues Ala-335–Phe-355. Over Gln-356–Phe-434 the chain is Cytoplasmic. A compositionally biased stretch (basic residues) spans Trp-398–Arg-407. Residues Trp-398–Phe-434 are disordered. The span at Arg-417–Leu-426 shows a compositional bias: pro residues.

This sequence belongs to the G-protein coupled receptor 1 family.

It localises to the cell membrane. Orphan receptor. The chain is Probable G-protein coupled receptor 150 (GPR150) from Homo sapiens (Human).